Here is a 318-residue protein sequence, read N- to C-terminus: Aspartate carbamoyltransferase catalytic subunit (318 aa).

Positions 64 and 65 each coordinate carbamoyl phosphate. Lys92 contacts L-aspartate. Residues Arg114, His142, and Gln145 each coordinate carbamoyl phosphate. The L-aspartate site is built by Arg176 and Arg230. Positions 271 and 272 each coordinate carbamoyl phosphate.

It belongs to the aspartate/ornithine carbamoyltransferase superfamily. ATCase family. Heterododecamer (2C3:3R2) of six catalytic PyrB chains organized as two trimers (C3), and six regulatory PyrI chains organized as three dimers (R2).

The enzyme catalyses carbamoyl phosphate + L-aspartate = N-carbamoyl-L-aspartate + phosphate + H(+). It functions in the pathway pyrimidine metabolism; UMP biosynthesis via de novo pathway; (S)-dihydroorotate from bicarbonate: step 2/3. In terms of biological role, catalyzes the condensation of carbamoyl phosphate and aspartate to form carbamoyl aspartate and inorganic phosphate, the committed step in the de novo pyrimidine nucleotide biosynthesis pathway. In Desulfovibrio desulfuricans (strain ATCC 27774 / DSM 6949 / MB), this protein is Aspartate carbamoyltransferase catalytic subunit.